A 180-amino-acid polypeptide reads, in one-letter code: Trafficking protein particle complex subunit 3 (180 aa).

Cysteine 68 carries S-palmitoyl cysteine lipidation.

Belongs to the TRAPP small subunits family. BET3 subfamily. Homodimer. Part of the multisubunit TRAPP (transport protein particle) complex.

It localises to the golgi apparatus. It is found in the cis-Golgi network. Its subcellular location is the endoplasmic reticulum. May play a role in vesicular transport from endoplasmic reticulum to Golgi. The sequence is that of Trafficking protein particle complex subunit 3 (TRAPPC3) from Gallus gallus (Chicken).